A 160-amino-acid chain; its full sequence is N-acetyltransferase Pat (160 aa).

The N-acetyltransferase domain maps to 5 to 148 (IKIRKATKED…VYGEMRLTER (144 aa)). Positions 79, 81, 87, 89, 91, 92, 118, 123, and 127 each coordinate CoA.

The protein belongs to the acetyltransferase family. GNAT subfamily.

It carries out the reaction L-lysyl-[protein] + acetyl-CoA = N(6)-acetyl-L-lysyl-[protein] + CoA + H(+). In terms of biological role, modulates activity of albA1, the major archaeal DNA compaction protein, by decreasing albA1's nucleic acid binding affinity through acetylation of 'Lys-16'. The sequence is that of N-acetyltransferase Pat from Saccharolobus solfataricus (strain ATCC 35092 / DSM 1617 / JCM 11322 / P2) (Sulfolobus solfataricus).